Here is a 157-residue protein sequence, read N- to C-terminus: 17.8 kDa class I heat shock protein (157 aa).

The region spanning 41 to 156 (ETSAITNARV…KAQVKSIDIS (116 aa)) is the sHSP domain.

The protein belongs to the small heat shock protein (HSP20) family. In terms of assembly, homodimer under normal physiological conditions. Aggregates in high oligomeric complexes after heat shock. Binds to AKR2A and to chloroplasts. Expressed ubiquitously at low levels under normal physiological conditions.

The protein localises to the cytoplasm. Cytosolic mediator for sorting and targeting of nascent chloroplast outer envelope membrane (OEM) proteins to the chloroplast. Functions as an AKR2A cofactor to facilitate the targeting of OEP7 to chloroplasts. In Arabidopsis thaliana (Mouse-ear cress), this protein is 17.8 kDa class I heat shock protein (HSP17.8).